The sequence spans 525 residues: Serine/threonine protein phosphatase 2A 55 kDa regulatory subunit B beta isoform (525 aa).

The tract at residues 1–30 (MDPSSKSPDDDDLRPEAEAARRPQPQPQPR) is disordered. WD repeat units follow at residues 48–87 (QEVD…DSAS) and 124–165 (EIEE…VKRI). The tract at residues 169 to 191 (NLNTSQSSGNGTTSSSSSSSSRA) is disordered. The span at 171-189 (NTSQSSGNGTTSSSSSSSS) shows a compositional bias: low complexity. WD repeat units follow at residues 244–282 (AHDY…QSFN), 293–333 (DLTE…LCDN), 352–390 (EIIA…GPVA), and 495–525 (DLST…MYYA).

Belongs to the phosphatase 2A regulatory subunit B family. In terms of assembly, PP2A consists of a common heteromeric enzyme, composed of a catalytic subunit (subunits C), a constant regulatory subunit (subunit A), and a variety of regulatory subunits such as subunits B (the R2/B/PR55/B55, R3/B''/PR72/PR130/PR59 and R5/B'/B56 families).

Its function is as follows. The B regulatory subunit may modulate substrate selectivity and catalytic activity, and may also direct the localization of the catalytic enzyme to a particular subcellular compartment. This Oryza sativa subsp. japonica (Rice) protein is Serine/threonine protein phosphatase 2A 55 kDa regulatory subunit B beta isoform.